The chain runs to 176 residues: Large ribosomal subunit protein eL20 (176 aa).

Residue Lys11 forms a Glycyl lysine isopeptide (Lys-Gly) (interchain with G-Cter in SUMO2) linkage. Tyr63 is modified (phosphotyrosine). Ser71 is subject to Phosphoserine. Lys76 carries the post-translational modification N6-succinyllysine. At Ser123 the chain carries Phosphoserine. Glycyl lysine isopeptide (Lys-Gly) (interchain with G-Cter in SUMO2) cross-links involve residues Lys128 and Lys170.

The protein belongs to the eukaryotic ribosomal protein eL20 family. Component of the large ribosomal subunit. Binds IPO9 with high affinity.

Its subcellular location is the cytoplasm. Its function is as follows. Component of the large ribosomal subunit. The ribosome is a large ribonucleoprotein complex responsible for the synthesis of proteins in the cell. The chain is Large ribosomal subunit protein eL20 (Rpl18a) from Mus musculus (Mouse).